A 218-amino-acid polypeptide reads, in one-letter code: Small ribosomal subunit protein uS3c (218 aa).

In terms of domain architecture, KH type-2 spans 47 to 118; that stretch reads VQKEMRISSG…RLNVVITRVA (72 aa).

The protein belongs to the universal ribosomal protein uS3 family. Part of the 30S ribosomal subunit.

It localises to the plastid. The protein resides in the chloroplast. This Ceratophyllum demersum (Rigid hornwort) protein is Small ribosomal subunit protein uS3c (rps3).